A 341-amino-acid polypeptide reads, in one-letter code: DER1-like family member protein 1 (341 aa).

At 1–41 the chain is on the cytoplasmic side; it reads MAGPRNVRTLHGNGGRNNDVMGPKEFWLNIPPITRTLFTLA. The chain crosses the membrane as a helical span at residues 42–62; the sequence is IVMTIVGRLNLINPWYFIYVW. Over 63–122 the chain is Lumenal; that stretch reads NLTFKKVQIWRLLTSCVMLSSRAMPALMELYSIYDRSSQLERGHFGPGLSNRRGPMVTVD. Residues 123-143 traverse the membrane as a helical segment; sequence YAYYLCFCILAITTATTIIYG. The Cytoplasmic portion of the chain corresponds to 144–170; the sequence is SYYPVVLTSGFISCITYTWSIDNANVQ. Residues 171–191 traverse the membrane as a helical segment; that stretch reads IMFYGLIPVWGKYFPLIQLFI. Ser-192 is a topological domain (lumenal). The helical transmembrane segment at 193–213 threads the bilayer; that stretch reads FVFNEGDFVISLIGFTTGYLY. Topologically, residues 214–341 are cytoplasmic; the sequence is TCLDTHTLGP…GQTNSPSDSQ (128 aa). Composition is skewed to polar residues over residues 276–286 and 296–341; these read SSQRETRTFSG and ATLS…SDSQ. The interval 276–341 is disordered; it reads SSQRETRTFS…GQTNSPSDSQ (66 aa).

The protein belongs to the derlin family.

It localises to the endoplasmic reticulum membrane. In terms of biological role, may be involved in the degradation process of some misfolded endoplasmic reticulum (ER) luminal proteins. Its precise role is however unclear and its inability to complement der1 mutations, suggests either that it is not involved in degradation process of misfolded proteins, or that it participates in the destruction of specific misfolded ER luminal proteins. The sequence is that of DER1-like family member protein 1 (DFM1) from Saccharomyces cerevisiae (strain ATCC 204508 / S288c) (Baker's yeast).